We begin with the raw amino-acid sequence, 131 residues long: Torsin-1A-interacting protein 2, isoform IFRG15 (131 aa).

The polypeptide is Torsin-1A-interacting protein 2, isoform IFRG15 (Tor1aip2) (Mus musculus (Mouse)).